Reading from the N-terminus, the 90-residue chain is Small ribosomal subunit protein uS15 (90 aa).

It belongs to the universal ribosomal protein uS15 family. In terms of assembly, part of the 30S ribosomal subunit. Forms a bridge to the 50S subunit in the 70S ribosome, contacting the 23S rRNA.

One of the primary rRNA binding proteins, it binds directly to 16S rRNA where it helps nucleate assembly of the platform of the 30S subunit by binding and bridging several RNA helices of the 16S rRNA. Its function is as follows. Forms an intersubunit bridge (bridge B4) with the 23S rRNA of the 50S subunit in the ribosome. This Helicobacter pylori (strain J99 / ATCC 700824) (Campylobacter pylori J99) protein is Small ribosomal subunit protein uS15.